The chain runs to 3515 residues: Microtubule-actin cross-linking factor 1, isoforms 6/7 (3515 aa).

Disordered stretches follow at residues 1–23 (MGKPLSRPDCLRRNPSCLGKGEE), 108–136 (VQKSAPVPPRRRPNAERKDNVNRRSWKSF), 155–196 (VSEA…TLEH), 965–1178 (TEED…AVPT), 1217–1298 (SPAA…SPAA), 1710–1730 (EELATSGGQSPTGEQIPQFQQ), and 3078–3108 (PTHAPFIEKSRSGGRKSLSQPTPPPMPILSQ). Residues 120–129 (PNAERKDNVN) show a composition bias toward basic and acidic residues. The interval 157–245 (EAGASNPSLQ…ESEAVATSGN (89 aa)) is 13 X 13 AA approximate tandem repeat of P-T-S-P-A-A-A-V-P-T-P-E-E. Low complexity-rich tracts occupy residues 995–1031 (STPEEPASPAAAVPTPEEPTSPAAAVPTPEEPTSPAA) and 1040–1139 (TSPA…AVPT). 13 repeat units span residues 1012–1024 (EPTSPAAAVPTPE), 1026–1037 (PTSPAAAVPPPE), 1038–1051 (EPTSPAAAVPTPEE), 1052–1064 (PTSPAAAVPTPEE), 1065–1077 (PTSPAAAVPTPEE), 1078–1090 (PTSPAAAVPTPEE), 1091–1103 (PTSPAAAVPTPEE), 1104–1116 (PTSPAAAVPTPEE), 1117–1129 (PASPAAAVPTPEE), 1130–1142 (PASPAAAVPTPEE), 1143–1155 (PAFPAPAVPTPEE), 1156–1168 (SASAAVAVPTPEE), and 1169–1178 (SASPAAAVPT). Positions 1140 to 1151 (PEEPAFPAPAVP) are enriched in pro residues. Low complexity-rich tracts occupy residues 1162 to 1178 (AVPTPEESASPAAAVPT) and 1268 to 1298 (SSPAASVPTPEEPASPAAAVSNLEEPASPAA). Residues 1715–1730 (SGGQSPTGEQIPQFQQ) are compositionally biased toward polar residues. EF-hand domains follow at residues 3168–3203 (HKKSRVMDFFRRIDKDQDGKITRQEFIDGILASKFP) and 3204–3239 (TTKLEMTAVADIFDRDGDGYIDYYEFVAALHPNKDA). Residues Asp3181, Asp3183, Asp3185, Lys3187, Glu3192, Asp3217, Asp3219, Asp3221, Tyr3223, and Glu3228 each coordinate Ca(2+). The GAR domain maps to 3244-3316 (TDADKIEDEV…EFLVKNDPCR (73 aa)). Positions 3332-3515 (PEGASQGMTP…ASPRTPGPKR (184 aa)) are disordered. Positions 3352–3386 (SSRAASPTRSSSSASQSNHSCTSMPSSPATPASGT) are enriched in low complexity. Residues 3402–3426 (TFHSSRTSLAGDTSNSSSPASTGAK) show a composition bias toward polar residues. Positions 3437 to 3451 (SRPGSRAGSRAGSRA) are enriched in low complexity. Over residues 3466–3488 (ETQSACSDTSESSAAGGQGNSRR) the composition is skewed to polar residues.

It is found in the cytoplasm. The protein localises to the cytoskeleton. The chain is Microtubule-actin cross-linking factor 1, isoforms 6/7 from Homo sapiens (Human).